We begin with the raw amino-acid sequence, 536 residues long: CTP synthase (536 aa).

Positions 1 to 268 (MSTKYVFVTG…DNLVCEKLHL (268 aa)) are amidoligase domain. Ser-14 is a binding site for CTP. Position 14 (Ser-14) interacts with UTP. Residue 15–20 (ALGKGI) coordinates ATP. Tyr-55 is a binding site for L-glutamine. Residue Asp-72 participates in ATP binding. Asp-72 and Glu-142 together coordinate Mg(2+). Residues 149 to 151 (DIE), 189 to 194 (KTKPTQ), and Lys-225 contribute to the CTP site. UTP contacts are provided by residues 189–194 (KTKPTQ) and Lys-225. Residues 293–535 (KIALVGKYVE…IKAALEENKS (243 aa)) form the Glutamine amidotransferase type-1 domain. Gly-355 lines the L-glutamine pocket. Cys-382 serves as the catalytic Nucleophile; for glutamine hydrolysis. L-glutamine contacts are provided by residues 383–386 (LGMQ), Glu-406, and Arg-463. Residues His-508 and Glu-510 contribute to the active site.

It belongs to the CTP synthase family. Homotetramer.

The enzyme catalyses UTP + L-glutamine + ATP + H2O = CTP + L-glutamate + ADP + phosphate + 2 H(+). It catalyses the reaction L-glutamine + H2O = L-glutamate + NH4(+). The catalysed reaction is UTP + NH4(+) + ATP = CTP + ADP + phosphate + 2 H(+). It functions in the pathway pyrimidine metabolism; CTP biosynthesis via de novo pathway; CTP from UDP: step 2/2. Its activity is regulated as follows. Allosterically activated by GTP, when glutamine is the substrate; GTP has no effect on the reaction when ammonia is the substrate. The allosteric effector GTP functions by stabilizing the protein conformation that binds the tetrahedral intermediate(s) formed during glutamine hydrolysis. Inhibited by the product CTP, via allosteric rather than competitive inhibition. Functionally, catalyzes the ATP-dependent amination of UTP to CTP with either L-glutamine or ammonia as the source of nitrogen. Regulates intracellular CTP levels through interactions with the four ribonucleotide triphosphates. This chain is CTP synthase, found in Clostridium beijerinckii (strain ATCC 51743 / NCIMB 8052) (Clostridium acetobutylicum).